We begin with the raw amino-acid sequence, 508 residues long: Catalase (508 aa).

The first 21 residues, 1-21 (MHMSKSFLLISMGLASISVHA), serve as a signal peptide directing secretion. Catalysis depends on residues His72 and Asn145. A heme-binding site is contributed by Tyr353. Residues 373–392 (PKSPVANHNQDGPSNNSTGL) show a composition bias toward polar residues. The segment at 373-396 (PKSPVANHNQDGPSNNSTGLGNVD) is disordered.

Belongs to the catalase family. The cofactor is heme.

It localises to the periplasm. The enzyme catalyses 2 H2O2 = O2 + 2 H2O. Functionally, decomposes hydrogen peroxide into water and oxygen; serves to protect cells from the toxic effects of hydrogen peroxide. The protein is Catalase of Vibrio vulnificus (strain CMCP6).